Consider the following 105-residue polypeptide: MVVRYPMAVGLNKGHKVTKNVSKPKHSRRRGRLTKHAKFARDLIREVCGFAPYERRAMELLKVSKDKRALKFIKKRVGTHIRAKRKREELSNTLAAMRKAAAKKE.

The protein belongs to the eukaryotic ribosomal protein eL36 family. As to quaternary structure, component of the large ribosomal subunit.

It is found in the cytoplasm. It localises to the cytosol. In terms of biological role, component of the large ribosomal subunit. The ribosome is a large ribonucleoprotein complex responsible for the synthesis of proteins in the cell. The polypeptide is Large ribosomal subunit protein eL36 (rpl36) (Danio rerio (Zebrafish)).